The sequence spans 283 residues: 5'-nucleotidase SurE (283 aa).

Residues aspartate 14, aspartate 15, serine 47, and asparagine 105 each coordinate a divalent metal cation.

This sequence belongs to the SurE nucleotidase family. The cofactor is a divalent metal cation.

Its subcellular location is the cytoplasm. The enzyme catalyses a ribonucleoside 5'-phosphate + H2O = a ribonucleoside + phosphate. Nucleotidase that shows phosphatase activity on nucleoside 5'-monophosphates. This Chlamydia muridarum (strain MoPn / Nigg) protein is 5'-nucleotidase SurE.